A 180-amino-acid chain; its full sequence is Shikimate kinase (180 aa).

14 to 19 provides a ligand contact to ATP; that stretch reads GAGKSC. Residue Ser-18 participates in Mg(2+) binding. 3 residues coordinate substrate: Asp-36, Arg-60, and Gly-82. Arg-120 lines the ATP pocket. A substrate-binding site is contributed by Arg-139.

The protein belongs to the shikimate kinase family. Monomer. Mg(2+) is required as a cofactor.

The protein localises to the cytoplasm. The catalysed reaction is shikimate + ATP = 3-phosphoshikimate + ADP + H(+). Its pathway is metabolic intermediate biosynthesis; chorismate biosynthesis; chorismate from D-erythrose 4-phosphate and phosphoenolpyruvate: step 5/7. Its function is as follows. Catalyzes the specific phosphorylation of the 3-hydroxyl group of shikimic acid using ATP as a cosubstrate. The protein is Shikimate kinase of Xanthomonas oryzae pv. oryzae (strain PXO99A).